The chain runs to 1446 residues: Toll-like receptor 7 (1446 aa).

The first 16 residues, 1-16 (MAAILLLLLGFSWSLA), serve as a signal peptide directing secretion. Topologically, residues 17–1049 (VESALAPKES…QHGIPESYIP (1033 aa)) are extracellular. 23 LRR repeats span residues 133–156 (LQTL…AFEG), 158–180 (ATLK…TLEL), 188–211 (LKQL…FLCP), 213–235 (GNLQ…GFAD), 246–270 (GSEL…GISR), 271–294 (LRRL…ALAG), 295–318 (LASL…LFAG), 320–342 (KELR…LFHR), 344–368 (EQLL…TFAG), 369–392 (LIRL…TFKE), 393–416 (LYFL…AFLP), 417–440 (LYNL…LFNG), 442–464 (YVLS…VFKN), 465–488 (CSDL…LQDL), 489–511 (AMLR…SFKN), 513–535 (HQLT…MFQD), 536–559 (LPRL…SFDK), 561–582 (FELE…VFAT), 584–605 (VSLL…AFIP), 606–629 (SNLK…KLQE), 631–652 (IRVK…MSIP), 653–675 (NTIE…AFVD), and 677–699 (ANLA…QLRV). Residues 716–773 (NPFECDCTMDWLQRINNLTTRQHPRVMDMANIECVMPHARGAAVRPLSGLRPQDFLCR) form the LRRCT domain. Disulfide bonds link cysteine 722–cysteine 772, cysteine 796–cysteine 802, and cysteine 800–cysteine 815. LRR repeat units lie at residues 828 to 851 (PMDS…AFIG), 852 to 875 (RKNL…TFAS), 876 to 899 (LASL…EFEQ), 900 to 923 (LSAL…TLAP), 925 to 947 (AALE…QMHA), and 951 to 979 (GTRL…SYVA). Cysteine 966 and cysteine 993 are disulfide-bonded. A helical membrane pass occupies residues 1050-1070 (LLAAALALLFLLVVIAMVFAF). The Cytoplasmic portion of the chain corresponds to 1071–1446 (RESLRIWLFA…QGPHVQAYLV (376 aa)). Positions 1096–1233 (KLYDAVLLHS…HFWEKLRYAL (138 aa)) constitute a TIR domain. 2 disordered regions span residues 1301 to 1332 (QNYS…NHHL) and 1388 to 1446 (RPKR…AYLV). A compositionally biased stretch (polar residues) spans 1395–1413 (HLQQAQAGTLGSKASQAAH). Over residues 1414–1426 (QQQQQQQQQQQQQ) the composition is skewed to low complexity. The span at 1427-1439 (PNPTAVSGQQQGP) shows a compositional bias: polar residues.

This sequence belongs to the Toll-like receptor family. In terms of tissue distribution, expressed in the fan-shaped body and the ellipsoid body, which are components of the locomotion center in the CNS (at protein level).

It localises to the cell membrane. Its function is as follows. Toll-related receptor which binds to the neurotrophins NT1 and spz5. Essential for antiviral autophagy, it detects and binds to the vesicular stomatitis virus (vsv) following infection. This role is likely to be independent of the canonical Toll, immune deficiency, and JAK-STAT signaling pathways. Functions in olfactory circuit assembly by promoting synaptic partner matching between olfactory receptor neurons (ORN) axons and projection neurons (PN) dendrites partners in the antennal lobe. Function in the Va1d ORNs is necessary and sufficient for correct targeting to their partner PN dendrites. Also involved in the targeting of other classes of ORN axons. Functions with Toll-6 to regulate motor axon targeting and neuronal survival in the central nervous system (CNS). May be an upstream component of the NF-kappa-B (rel) regulatory cascade. This chain is Toll-like receptor 7, found in Drosophila melanogaster (Fruit fly).